The sequence spans 900 residues: Peroxisomal hydratase-dehydrogenase-epimerase (900 aa).

Short-chain dehydrogenase like regions lie at residues 6–230 and 319–535; these read SFKD…THES and SLCN…ASEE. NADP(+)-binding residues include Ile-14, Lys-53, Asn-100, Arg-133, Tyr-165, and Lys-169. The Proton donor role is filled by Tyr-165. The active-site Lowers pKa of active site Tyr is the Lys-169. 8 residues coordinate (3R)-3-hydroxydecanoyl-CoA: His-689, Gly-690, Lys-719, Asp-803, Asn-805, Gly-826, Phe-851, and Thr-852. Residues 775 to 887 enclose the MaoC-like domain; that stretch reads EVPHGKVPDF…DTTRNVIVLD (113 aa). Residues 898–900 carry the Microbody targeting signal motif; it reads SKL.

The protein belongs to the short-chain dehydrogenases/reductases (SDR) family. Monomer.

It is found in the peroxisome. It catalyses the reaction a (3R)-3-hydroxyacyl-CoA = a (2E)-enoyl-CoA + H2O. The enzyme catalyses a (3R)-3-hydroxyacyl-CoA + NAD(+) = a 3-oxoacyl-CoA + NADH + H(+). The protein operates within lipid metabolism; fatty acid beta-oxidation. Its function is as follows. Second trifunctional enzyme acting on the beta-oxidation pathway for fatty acids, possessing hydratase-dehydrogenase-epimerase activities. Converts trans-2-enoyl-CoA via D-3-hydroxyacyl-CoA to 3-ketoacyl-CoA. In Saccharomyces cerevisiae (strain ATCC 204508 / S288c) (Baker's yeast), this protein is Peroxisomal hydratase-dehydrogenase-epimerase (FOX2).